A 132-amino-acid chain; its full sequence is Small ribosomal subunit protein uS8 (132 aa).

This sequence belongs to the universal ribosomal protein uS8 family. In terms of assembly, part of the 30S ribosomal subunit. Contacts proteins S5 and S12.

One of the primary rRNA binding proteins, it binds directly to 16S rRNA central domain where it helps coordinate assembly of the platform of the 30S subunit. The polypeptide is Small ribosomal subunit protein uS8 (Paramagnetospirillum magneticum (strain ATCC 700264 / AMB-1) (Magnetospirillum magneticum)).